The chain runs to 259 residues: Adenosylcobinamide-GDP ribazoletransferase (259 aa).

The next 6 membrane-spanning stretches (helical) occupy residues 9 to 29 (NLFF…WIEV), 43 to 63 (LVGL…LYWV), 64 to 84 (SPSV…GGFH), 118 to 138 (ALAL…LALF), 143 to 163 (VSLA…SFIF), and 196 to 216 (VLAL…GLVI).

The protein belongs to the CobS family. Mg(2+) is required as a cofactor.

It localises to the cell inner membrane. The enzyme catalyses alpha-ribazole + adenosylcob(III)inamide-GDP = adenosylcob(III)alamin + GMP + H(+). The catalysed reaction is alpha-ribazole 5'-phosphate + adenosylcob(III)inamide-GDP = adenosylcob(III)alamin 5'-phosphate + GMP + H(+). Its pathway is cofactor biosynthesis; adenosylcobalamin biosynthesis; adenosylcobalamin from cob(II)yrinate a,c-diamide: step 7/7. Its function is as follows. Joins adenosylcobinamide-GDP and alpha-ribazole to generate adenosylcobalamin (Ado-cobalamin). Also synthesizes adenosylcobalamin 5'-phosphate from adenosylcobinamide-GDP and alpha-ribazole 5'-phosphate. In Shewanella halifaxensis (strain HAW-EB4), this protein is Adenosylcobinamide-GDP ribazoletransferase.